The sequence spans 388 residues: Succinate--CoA ligase [ADP-forming] subunit beta (388 aa).

Positions 9–244 (KEILRKFGVA…LDEEDPAEIE (236 aa)) constitute an ATP-grasp domain. ATP-binding positions include lysine 46, 53–55 (GRG), glutamate 99, alanine 102, and glutamate 107. Mg(2+) is bound by residues asparagine 199 and aspartate 213. Substrate contacts are provided by residues asparagine 264 and 321–323 (GIM).

It belongs to the succinate/malate CoA ligase beta subunit family. As to quaternary structure, heterotetramer of two alpha and two beta subunits. Mg(2+) is required as a cofactor.

The enzyme catalyses succinate + ATP + CoA = succinyl-CoA + ADP + phosphate. The catalysed reaction is GTP + succinate + CoA = succinyl-CoA + GDP + phosphate. It participates in carbohydrate metabolism; tricarboxylic acid cycle; succinate from succinyl-CoA (ligase route): step 1/1. Its function is as follows. Succinyl-CoA synthetase functions in the citric acid cycle (TCA), coupling the hydrolysis of succinyl-CoA to the synthesis of either ATP or GTP and thus represents the only step of substrate-level phosphorylation in the TCA. The beta subunit provides nucleotide specificity of the enzyme and binds the substrate succinate, while the binding sites for coenzyme A and phosphate are found in the alpha subunit. In Burkholderia thailandensis (strain ATCC 700388 / DSM 13276 / CCUG 48851 / CIP 106301 / E264), this protein is Succinate--CoA ligase [ADP-forming] subunit beta.